Reading from the N-terminus, the 104-residue chain is L-rhamnose mutarotase (104 aa).

Tyr18 lines the substrate pocket. Catalysis depends on His22, which acts as the Proton donor. Substrate contacts are provided by residues Tyr41 and 76–77 (WW).

It belongs to the rhamnose mutarotase family. As to quaternary structure, homodimer.

Its subcellular location is the cytoplasm. It carries out the reaction alpha-L-rhamnose = beta-L-rhamnose. It participates in carbohydrate metabolism; L-rhamnose metabolism. Functionally, involved in the anomeric conversion of L-rhamnose. The chain is L-rhamnose mutarotase from Oceanobacillus iheyensis (strain DSM 14371 / CIP 107618 / JCM 11309 / KCTC 3954 / HTE831).